The chain runs to 1272 residues: Myosin-3 (1272 aa).

The tract at residues 1-20 (MAVIKKGARRKDVKEPKKRS) is disordered. A Myosin motor domain is found at 36–715 (VGISDLTLLS…SLFALEDMRD (680 aa)). Residue 129 to 136 (GESGAGKT) participates in ATP binding. At Ser-357 the chain carries Phosphoserine. An actin-binding region spans residues 588-610 (ANELVETLSKAEPSYIRTIKPNQ). IQ domains lie at 719 to 739 (YNMA…RIDA) and 740 to 765 (AIKI…YGTK). The 191-residue stretch at 771-961 (KERRSMSLLG…TIYVRRGHPA (191 aa)) folds into the TH1 domain. Disordered stretches follow at residues 951–1015 (STIY…QKPV), 1029–1141 (YNPK…SELP), and 1217–1272 (VQFG…DDDW). The span at 980-1000 (IKSKKSKHKSTHKHTHSHRSH) shows a compositional bias: basic residues. Over residues 1066-1078 (KKASSSHKSSSAK) the composition is skewed to low complexity. Residues 1089 to 1098 (GVEKNKEPLK) are compositionally biased toward basic and acidic residues. The span at 1109–1118 (PIPPPPPPMG) shows a compositional bias: pro residues. The SH3 domain occupies 1120-1182 (PKDPKFEAAY…PTAYMTPYKD (63 aa)). Over residues 1217 to 1236 (VQFGSATVGPTSDNQSNPVG) the composition is skewed to polar residues. Positions 1258–1272 (ADDDDNDDGDDDDDW) are enriched in acidic residues.

It belongs to the TRAFAC class myosin-kinesin ATPase superfamily. Myosin family. In terms of assembly, interacts (via myosin motor domain) with SHE4; this interaction is important for proper localization and may regulate the interaction of the motor domain with actin. Interacts (via SH3 domain) with VRP1; this interaction is required for localization to sites of polarized growth and may regulate the interaction of the tail domain with actin. Interacts (via SH3 domain) with PAN1; this interaction is important for late stages of endocytopsis. Interacts (via SH3 domain) with BBC1 and LAS17. Interacts (via C-terminal acidic tail) with ARC19 and ARC40; ARC19 and ARC40 are Arp2/3 complex subunits. In terms of processing, phosphorylation of the TEDS site (Ser-357) is required for the polarization of the actin cytoskeleton and for ligand-induced, but not for constitutive internalization of STE2. Phosphorylation probably activates the myosin-I ATPase. Ser-357 is phosphorylated by CLA4 and STE20 in vitro.

It is found in the cytoplasm. The protein localises to the cytoskeleton. It localises to the actin patch. Its function is as follows. One of two redundant type-I myosins implicated in the organization of the actin cytoskeleton. Required for proper actin cytoskeleton polarization and for the internalization step in endocytosis. At the cell cortex, assembles in patch-like structures together with proteins from the actin-polymerizing machinery and promotes actin assembly. Functions redundantly with LAS17 as actin nucleation-promoting factor (NPF) for the Arp2/3 complex. Motor domain phosphorylation by PAK kinases CLA4 and STE20 promotes CDC42-regulated actin assembly. Functions together with the NPF PAN1 in late stages of endocytosis. Motor domain phosphorylation by PDK1 kinases PKH1 and PKH2, and by SGK kinases YPK1 and YPK2, promotes ligand-induced, but not constitutive endocytosis of the G protein-coupled receptor STE2. This is Myosin-3 (MYO3) from Saccharomyces cerevisiae (strain ATCC 204508 / S288c) (Baker's yeast).